Consider the following 393-residue polypeptide: S-adenosylmethionine synthase (393 aa).

Residue histidine 16 participates in ATP binding. Aspartate 18 is a Mg(2+) binding site. Residue glutamate 44 coordinates K(+). The L-methionine site is built by glutamate 57 and glutamine 100. Residues 100-110 (QSNDIAQGVDH) are flexible loop. Residues 167–169 (DAK), 238–239 (RF), aspartate 247, 253–254 (RK), alanine 270, and lysine 274 contribute to the ATP site. Residue aspartate 247 coordinates L-methionine. Residue lysine 278 coordinates L-methionine.

The protein belongs to the AdoMet synthase family. Homotetramer; dimer of dimers. The cofactor is Mg(2+). K(+) serves as cofactor.

The protein localises to the cytoplasm. It carries out the reaction L-methionine + ATP + H2O = S-adenosyl-L-methionine + phosphate + diphosphate. It functions in the pathway amino-acid biosynthesis; S-adenosyl-L-methionine biosynthesis; S-adenosyl-L-methionine from L-methionine: step 1/1. Its function is as follows. Catalyzes the formation of S-adenosylmethionine (AdoMet) from methionine and ATP. The overall synthetic reaction is composed of two sequential steps, AdoMet formation and the subsequent tripolyphosphate hydrolysis which occurs prior to release of AdoMet from the enzyme. In Leptothrix cholodnii (strain ATCC 51168 / LMG 8142 / SP-6) (Leptothrix discophora (strain SP-6)), this protein is S-adenosylmethionine synthase.